A 95-amino-acid polypeptide reads, in one-letter code: Aspartyl/glutamyl-tRNA(Asn/Gln) amidotransferase subunit C (95 aa).

It belongs to the GatC family. In terms of assembly, heterotrimer of A, B and C subunits.

The catalysed reaction is L-glutamyl-tRNA(Gln) + L-glutamine + ATP + H2O = L-glutaminyl-tRNA(Gln) + L-glutamate + ADP + phosphate + H(+). The enzyme catalyses L-aspartyl-tRNA(Asn) + L-glutamine + ATP + H2O = L-asparaginyl-tRNA(Asn) + L-glutamate + ADP + phosphate + 2 H(+). Allows the formation of correctly charged Asn-tRNA(Asn) or Gln-tRNA(Gln) through the transamidation of misacylated Asp-tRNA(Asn) or Glu-tRNA(Gln) in organisms which lack either or both of asparaginyl-tRNA or glutaminyl-tRNA synthetases. The reaction takes place in the presence of glutamine and ATP through an activated phospho-Asp-tRNA(Asn) or phospho-Glu-tRNA(Gln). The chain is Aspartyl/glutamyl-tRNA(Asn/Gln) amidotransferase subunit C from Campylobacter concisus (strain 13826).